The sequence spans 360 residues: tRNA/tmRNA (uracil-C(5))-methyltransferase (360 aa).

S-adenosyl-L-methionine is bound by residues Gln185, Tyr213, Asn218, Glu234, and Asp294. Residue Cys319 is the Nucleophile of the active site. The active-site Proton acceptor is the Glu353.

The protein belongs to the class I-like SAM-binding methyltransferase superfamily. RNA M5U methyltransferase family. TrmA subfamily.

It carries out the reaction uridine(54) in tRNA + S-adenosyl-L-methionine = 5-methyluridine(54) in tRNA + S-adenosyl-L-homocysteine + H(+). The catalysed reaction is uridine(341) in tmRNA + S-adenosyl-L-methionine = 5-methyluridine(341) in tmRNA + S-adenosyl-L-homocysteine + H(+). In terms of biological role, dual-specificity methyltransferase that catalyzes the formation of 5-methyluridine at position 54 (m5U54) in all tRNAs, and that of position 341 (m5U341) in tmRNA (transfer-mRNA). This is tRNA/tmRNA (uracil-C(5))-methyltransferase from Nitratiruptor sp. (strain SB155-2).